Reading from the N-terminus, the 124-residue chain is PLSAADKTIIKHLTGSVRTNAEAWGAESLARLFATSPSTKTYFSKFNDFTANGKRLHGGKVLNAVADVTDHLDNLAVLHGTTLLVDPHNFPLLSQSLLVTLAAHLLALDKFLDEVAKALSSHYR.

The Globin domain maps to P1–R124. An O2-binding site is contributed by H57. A heme b-binding site is contributed by H79.

Belongs to the globin family. Hb 1 is a heterotetramer of two alpha and two beta-1 chains. Hb 2 is a heterotetramer of two alpha and two beta-2 chains. Hb 3 is a heterotetramer of two alpha and two beta-3 chains. Red blood cells (at protein level).

Its function is as follows. Involved in oxygen transport from gills to the various peripheral tissues. The sequence is that of Hemoglobin subunit alpha from Somniosus microcephalus (Greenland sleeper shark).